The sequence spans 314 residues: UDP-N-acetylenolpyruvoylglucosamine reductase (314 aa).

One can recognise an FAD-binding PCMH-type domain in the interval 25-191 (KIGGPADLFA…VRVGMELRWG (167 aa)). Arg-170 is an active-site residue. The active-site Proton donor is Ser-220. Residue Glu-291 is part of the active site.

It belongs to the MurB family. FAD serves as cofactor.

It is found in the cytoplasm. The enzyme catalyses UDP-N-acetyl-alpha-D-muramate + NADP(+) = UDP-N-acetyl-3-O-(1-carboxyvinyl)-alpha-D-glucosamine + NADPH + H(+). Its pathway is cell wall biogenesis; peptidoglycan biosynthesis. In terms of biological role, cell wall formation. This Heliobacterium modesticaldum (strain ATCC 51547 / Ice1) protein is UDP-N-acetylenolpyruvoylglucosamine reductase.